The sequence spans 67 residues: Large ribosomal subunit protein bL31 (67 aa).

The protein belongs to the bacterial ribosomal protein bL31 family. Type A subfamily. Part of the 50S ribosomal subunit.

Functionally, binds the 23S rRNA. The sequence is that of Large ribosomal subunit protein bL31 from Wolinella succinogenes (strain ATCC 29543 / DSM 1740 / CCUG 13145 / JCM 31913 / LMG 7466 / NCTC 11488 / FDC 602W) (Vibrio succinogenes).